Here is a 565-residue protein sequence, read N- to C-terminus: Oxygen-dependent choline dehydrogenase (565 aa).

An FAD-binding site is contributed by 7–36 (DYIICGAGSAGNVLATRLTEDPGVTVLLLE). Catalysis depends on histidine 474, which acts as the Proton acceptor.

Belongs to the GMC oxidoreductase family. The cofactor is FAD.

The enzyme catalyses choline + A = betaine aldehyde + AH2. It catalyses the reaction betaine aldehyde + NAD(+) + H2O = glycine betaine + NADH + 2 H(+). It functions in the pathway amine and polyamine biosynthesis; betaine biosynthesis via choline pathway; betaine aldehyde from choline (cytochrome c reductase route): step 1/1. Its function is as follows. Involved in the biosynthesis of the osmoprotectant glycine betaine. Catalyzes the oxidation of choline to betaine aldehyde and betaine aldehyde to glycine betaine at the same rate. The polypeptide is Oxygen-dependent choline dehydrogenase (Burkholderia pseudomallei (strain 1710b)).